The primary structure comprises 771 residues: MMDALRVLLETSTFNEVLRGLAISILLAKLTQSTTSSSKSQGSTFITASGFILIYFFARSWLALVNHYAPEPYLDEVFHIPQAQTYCEGRYHEWDNKITTPPGLYLLSVGWHKLVRLVECTPSSLRSNNLVATLLIALIALSCRRRIEAQTAVGIEKSAVSFYAYHTAINIALFPVIFFFSGLYYTDVASTLVMLVAYWNHLNRVASHSEKPGFLNGLWTVVLGVAALFMRQTNVFWVVVYMGGLEAAHVVKGLKPKPVSKNDTPDFVLENIRDSFGFWLRRYAVGDVHDPPVDMAWPDDWALCLLSIGIAALCNPLRVLRQVWPHITIMGLFAGFVAWNGGVVLGDKSNHIATIHLPQMLYIWPFFAFFSAPLLIPRVLSTLADLITHARTPTPSHTTTKDPGRSSWRFTKPSITSKKSSTTKPPQRSGPTPASSSSSSSSFSPDTNSSGRGFRFILDLVLSRKLYYPFYLLATILLSAAIIHYNTIIHPFTLADNRHYMFYIFRYTILRSSLVRLALVAAYTLSRWLIWKRLEGNNPPLRDLAGETGLKITKNKLGWRDEFSASPFVTQDFYGPKTIKTDEQKNIKDKQKEVEEEEEEEEKEDWLIGGAYTTLSLSSTQPSPATSSPPTSTVLLWLLTTTLSLVTAPLVEPRYFILPWVFYRLLVPAMPVSSSLVSSSSSSSFASSTTESGNGDGNDAATAARQQQNGNGKRGLLWNIIRRTDAALALETVWFLAINIGTMYMFLFKPFYWKTASGEMLDGGRLQRFMW.

Transmembrane regions (helical) follow at residues 45–65, 160–180, 182–202, 221–241, 293–313, 326–346, and 357–377; these read FITA…LALV, VSFY…IFFF, GLYY…WNHL, VVLG…VVVY, VDMA…IAAL, HITI…VVLG, and LPQM…LLIP. The disordered stretch occupies residues 392 to 449; it reads TPTPSHTTTKDPGRSSWRFTKPSITSKKSSTTKPPQRSGPTPASSSSSSSSFSPDTNS. Low complexity-rich tracts occupy residues 411–426 and 435–449; these read TKPS…TKPP and SSSS…DTNS. N-linked (GlcNAc...) asparagine glycosylation occurs at Asn-448. A run of 2 helical transmembrane segments spans residues 469-489 and 503-525; these read PFYL…NTII and YIFR…AYTL. Residues 584–593 are compositionally biased toward basic and acidic residues; it reads QKNIKDKQKE. The tract at residues 584–605 is disordered; it reads QKNIKDKQKEVEEEEEEEEKED. Acidic residues predominate over residues 594–604; that stretch reads VEEEEEEEEKE. Helical transmembrane passes span 631 to 651 and 656 to 676; these read TSTV…APLV and FILP…SSSL. Residues 682-708 are disordered; it reads SSSFASSTTESGNGDGNDAATAARQQQ. A helical transmembrane segment spans residues 728–748; it reads LALETVWFLAINIGTMYMFLF.

This sequence belongs to the ALG10 glucosyltransferase family.

The protein resides in the endoplasmic reticulum membrane. It catalyses the reaction an alpha-D-Glc-(1-&gt;3)-alpha-D-Glc-(1-&gt;3)-alpha-D-Man-(1-&gt;2)-alpha-D-Man-(1-&gt;2)-alpha-D-Man-(1-&gt;3)-[alpha-D-Man-(1-&gt;2)-alpha-D-Man-(1-&gt;3)-[alpha-D-Man-(1-&gt;2)-alpha-D-Man-(1-&gt;6)]-alpha-D-Man-(1-&gt;6)]-beta-D-Man-(1-&gt;4)-beta-D-GlcNAc-(1-&gt;4)-alpha-D-GlcNAc-diphospho-di-trans,poly-cis-dolichol + a di-trans,poly-cis-dolichyl beta-D-glucosyl phosphate = a alpha-D-Glc-(1-&gt;2)-alpha-D-Glc-(1-&gt;3)-alpha-D-Glc-(1-&gt;3)-alpha-D-Man-(1-&gt;2)-alpha-D-Man-(1-&gt;2)-alpha-D-Man-(1-&gt;3)-[alpha-D-Man-(1-&gt;2)-alpha-D-Man-(1-&gt;3)-[alpha-D-Man-(1-&gt;2)-alpha-D-Man-(1-&gt;6)]-alpha-D-Man-(1-&gt;6)]-beta-D-Man-(1-&gt;4)-beta-D-GlcNAc-(1-&gt;4)-alpha-D-GlcNAc-diphospho-di-trans,poly-cis-dolichol + a di-trans,poly-cis-dolichyl phosphate + H(+). Its pathway is protein modification; protein glycosylation. Dol-P-Glc:Glc(2)Man(9)GlcNAc(2)-PP-Dol alpha-1,2-glucosyltransferase that operates in the biosynthetic pathway of dolichol-linked oligosaccharides, the glycan precursors employed in protein asparagine (N)-glycosylation. The assembly of dolichol-linked oligosaccharides begins on the cytosolic side of the endoplasmic reticulum membrane and finishes in its lumen. The sequential addition of sugars to dolichol pyrophosphate produces dolichol-linked oligosaccharides containing fourteen sugars, including two GlcNAcs, nine mannoses and three glucoses. Once assembled, the oligosaccharide is transferred from the lipid to nascent proteins by oligosaccharyltransferases. In the lumen of the endoplasmic reticulum, adds the third and last glucose residue from dolichyl phosphate glucose (Dol-P-Glc) onto the lipid-linked oligosaccharide intermediate Glc(2)Man(9)GlcNAc(2)-PP-Dol to produce Glc(3)Man(9)GlcNAc(2)-PP-Dol. The protein is Dol-P-Glc:Glc(2)Man(9)GlcNAc(2)-PP-Dol alpha-1,2-glucosyltransferase (alg-10) of Neurospora crassa (strain ATCC 24698 / 74-OR23-1A / CBS 708.71 / DSM 1257 / FGSC 987).